The sequence spans 177 residues: Peptide methionine sulfoxide reductase MsrA (177 aa).

The active site involves Cys12.

It belongs to the MsrA Met sulfoxide reductase family.

It carries out the reaction L-methionyl-[protein] + [thioredoxin]-disulfide + H2O = L-methionyl-(S)-S-oxide-[protein] + [thioredoxin]-dithiol. The enzyme catalyses [thioredoxin]-disulfide + L-methionine + H2O = L-methionine (S)-S-oxide + [thioredoxin]-dithiol. Functionally, has an important function as a repair enzyme for proteins that have been inactivated by oxidation. Catalyzes the reversible oxidation-reduction of methionine sulfoxide in proteins to methionine. The sequence is that of Peptide methionine sulfoxide reductase MsrA from Halobacterium salinarum (strain ATCC 29341 / DSM 671 / R1).